We begin with the raw amino-acid sequence, 158 residues long: Cytochrome c-type biogenesis protein CcmE (158 aa).

Residues 1–11 (MTRPDSGSSPA) show a composition bias toward polar residues. Residues 1–20 (MTRPDSGSSPAPLSEARRRK) form a disordered region. Topologically, residues 1-23 (MTRPDSGSSPAPLSEARRRKRNP) are cytoplasmic. Residues 24–44 (LPTVLGITALLGLAGFIAFGN) form a helical; Signal-anchor for type II membrane protein membrane-spanning segment. The Extracellular segment spans residues 45 to 158 (LNKSLEYFVT…ELRDLLEQSE (114 aa)). Heme-binding residues include H137 and Y141.

Belongs to the CcmE/CycJ family.

The protein resides in the cell membrane. In terms of biological role, heme chaperone required for the biogenesis of c-type cytochromes. Transiently binds heme delivered by CcmC and transfers the heme to apo-cytochromes in a process facilitated by CcmF and CcmH. This chain is Cytochrome c-type biogenesis protein CcmE, found in Deinococcus deserti (strain DSM 17065 / CIP 109153 / LMG 22923 / VCD115).